The sequence spans 214 residues: Pyridoxine/pyridoxamine 5'-phosphate oxidase (214 aa).

Residues 8–11 and Lys66 contribute to the substrate site; that span reads RINY. FMN contacts are provided by residues 61–66, 76–77, Arg82, Lys83, and Gln105; these read RIVLIK and FT. Positions 123, 127, and 131 each coordinate substrate. Residues 140–141 and Trp184 each bind FMN; that span reads QS. Residue 190 to 192 coordinates substrate; the sequence is RLH. Arg194 serves as a coordination point for FMN.

The protein belongs to the pyridoxamine 5'-phosphate oxidase family. Homodimer. FMN serves as cofactor.

It catalyses the reaction pyridoxamine 5'-phosphate + O2 + H2O = pyridoxal 5'-phosphate + H2O2 + NH4(+). The enzyme catalyses pyridoxine 5'-phosphate + O2 = pyridoxal 5'-phosphate + H2O2. It functions in the pathway cofactor metabolism; pyridoxal 5'-phosphate salvage; pyridoxal 5'-phosphate from pyridoxamine 5'-phosphate: step 1/1. It participates in cofactor metabolism; pyridoxal 5'-phosphate salvage; pyridoxal 5'-phosphate from pyridoxine 5'-phosphate: step 1/1. Catalyzes the oxidation of either pyridoxine 5'-phosphate (PNP) or pyridoxamine 5'-phosphate (PMP) into pyridoxal 5'-phosphate (PLP). This Burkholderia ambifaria (strain ATCC BAA-244 / DSM 16087 / CCUG 44356 / LMG 19182 / AMMD) (Burkholderia cepacia (strain AMMD)) protein is Pyridoxine/pyridoxamine 5'-phosphate oxidase.